A 372-amino-acid chain; its full sequence is 1,3,6,8-tetrahydroxynaphthalene synthase (372 aa).

Cys-138 is a catalytic residue.

It belongs to the thiolase-like superfamily. Chalcone/stilbene synthases family. In terms of assembly, homodimer.

It carries out the reaction 5 malonyl-CoA + 5 H(+) = naphthalene-1,3,6,8-tetrol + 5 CO2 + 5 CoA + H2O. Its pathway is pigment biosynthesis; melanin biosynthesis. Its function is as follows. Involved in the biosynthesis of melanin but also various secondary metabolites containing a naphthoquinone ring. Catalyzes the iterative condensation of five CoA-linked malonyl units to form a pentaketide intermediate. THNS subsequently catalyzes the dual intramolecular Claisen and aldol condensations of this linear intermediate to produce the fused ring of 1,3,6,8-tetrahydroxynaphthalene (THN). The chain is 1,3,6,8-tetrahydroxynaphthalene synthase from Streptomyces griseus.